The chain runs to 160 residues: Large ribosomal subunit protein eL21 (160 aa).

It belongs to the eukaryotic ribosomal protein eL21 family.

This is Large ribosomal subunit protein eL21 (rpl21) from Dictyostelium discoideum (Social amoeba).